The chain runs to 528 residues: NAD(P)H-quinone oxidoreductase chain 4 1 (528 aa).

The next 14 helical transmembrane spans lie at 7-27 (FPWL…IPLI), 32-52 (WVRW…AYVF), 86-106 (LSLP…VAAW), 114-134 (LFFF…LAQD), 136-156 (LLFF…ISIW), 168-188 (FILY…AMAF), 208-228 (ALEL…LPIF), 242-262 (SAPI…YGLI), 276-296 (FAPV…LAAF), 310-330 (IAHM…GING), 331-351 (AVLQ…LTGI), 375-395 (FALF…SGFV), 417-437 (GIAL…LSML), and 463-483 (MAVA…PRLA).

This sequence belongs to the complex I subunit 4 family.

It is found in the cellular thylakoid membrane. It carries out the reaction a plastoquinone + NADH + (n+1) H(+)(in) = a plastoquinol + NAD(+) + n H(+)(out). It catalyses the reaction a plastoquinone + NADPH + (n+1) H(+)(in) = a plastoquinol + NADP(+) + n H(+)(out). In terms of biological role, NDH-1 shuttles electrons from NAD(P)H, via FMN and iron-sulfur (Fe-S) centers, to quinones in the respiratory chain. The immediate electron acceptor for the enzyme in this species is believed to be plastoquinone. Couples the redox reaction to proton translocation (for every two electrons transferred, four hydrogen ions are translocated across the cytoplasmic membrane), and thus conserves the redox energy in a proton gradient. The chain is NAD(P)H-quinone oxidoreductase chain 4 1 from Synechococcus sp. (strain JA-2-3B'a(2-13)) (Cyanobacteria bacterium Yellowstone B-Prime).